The chain runs to 414 residues: Tryptophan synthase beta chain (414 aa).

The tract at residues 1–26 is disordered; the sequence is MVSTFSRQDQNYKNDDLNQPSKEGRF. Residues 10–26 are compositionally biased toward basic and acidic residues; sequence QNYKNDDLNQPSKEGRF. At K109 the chain carries N6-(pyridoxal phosphate)lysine.

Belongs to the TrpB family. In terms of assembly, tetramer of two alpha and two beta chains. Pyridoxal 5'-phosphate serves as cofactor.

The enzyme catalyses (1S,2R)-1-C-(indol-3-yl)glycerol 3-phosphate + L-serine = D-glyceraldehyde 3-phosphate + L-tryptophan + H2O. It functions in the pathway amino-acid biosynthesis; L-tryptophan biosynthesis; L-tryptophan from chorismate: step 5/5. In terms of biological role, the beta subunit is responsible for the synthesis of L-tryptophan from indole and L-serine. This Prochlorococcus marinus (strain MIT 9312) protein is Tryptophan synthase beta chain.